A 378-amino-acid polypeptide reads, in one-letter code: Probable endopolygalacturonase NFIA_008150 (378 aa).

The signal sequence occupies residues methionine 1–alanine 19. The propeptide occupies serine 20–arginine 35. An intrachain disulfide couples cysteine 38 to cysteine 56. 3 PbH1 repeats span residues threonine 147 to glycine 169, cysteine 170 to serine 200, and serine 201 to serine 222. The active-site Proton donor is the aspartate 215. Cysteine 217 and cysteine 233 are disulfide-bonded. The active site involves histidine 237. 2 PbH1 repeats span residues arginine 247 to alanine 273 and isoleucine 281 to glutamine 303. A glycan (N-linked (GlcNAc...) asparagine) is linked at asparagine 254. A glycan (N-linked (GlcNAc...) asparagine) is linked at asparagine 327. Cystine bridges form between cysteine 345–cysteine 350 and cysteine 369–cysteine 378.

It belongs to the glycosyl hydrolase 28 family.

Its subcellular location is the secreted. It catalyses the reaction (1,4-alpha-D-galacturonosyl)n+m + H2O = (1,4-alpha-D-galacturonosyl)n + (1,4-alpha-D-galacturonosyl)m.. Involved in maceration and soft-rotting of plant tissue. Hydrolyzes the 1,4-alpha glycosidic bonds of de-esterified pectate in the smooth region of the plant cell wall. The chain is Probable endopolygalacturonase NFIA_008150 from Neosartorya fischeri (strain ATCC 1020 / DSM 3700 / CBS 544.65 / FGSC A1164 / JCM 1740 / NRRL 181 / WB 181) (Aspergillus fischerianus).